Reading from the N-terminus, the 204-residue chain is Large ribosomal subunit protein mL67 (204 aa).

It belongs to the mitochondrion-specific ribosomal protein mL67 family.

Its subcellular location is the nucleus. It is found in the mitochondrion. Its function is as follows. Transcription factor involved in regulation of RNA polymerase II-dependent transcription. Also involved in regulation of mitochondrial DNA recombination, maintenance and repair, and generation of homoplasmic cells. The chain is Large ribosomal subunit protein mL67 (MHR1) from Yarrowia lipolytica (strain CLIB 122 / E 150) (Yeast).